A 635-amino-acid polypeptide reads, in one-letter code: Putative adagio-like protein 2 (635 aa).

The segment covering 1-25 (MEWDSDSEGSGDEEEEEEEEEEEGV) has biased composition (acidic residues). The segment at 1–32 (MEWDSDSEGSGDEEEEEEEEEEEGVEVGGGGD) is disordered. In terms of domain architecture, PAS spans 44–123 (ALAIEGVLGA…TDIRRCLEEG (80 aa)). Residue C91 is modified to S-4a-FMN cysteine. An F-box domain is found at 209–255 (SDLFLLSDEVLCQKILSRLSPRDIASVNSVCKRLYHLTRNDDLWRMV). 4 Kelch repeats span residues 371 to 421 (RLVL…TLDG), 423 to 474 (KLVV…VYDG), 476 to 530 (KILM…PPPR), and 542 to 594 (RILI…VVGG).

This sequence belongs to the ADAGIO family. FMN binds covalently to cysteine after exposure to blue light and is reversed in the dark.

It localises to the nucleus. Its pathway is protein modification; protein ubiquitination. Functionally, component of an E3 ubiquitin ligase complex that plays a central role in blue light-dependent circadian cycles. Acts as a blue light photoreceptor, due to the presence of FMN, that mediates light-regulated protein degradation of critical clock components by targeting them to the proteasome complex. In Oryza sativa subsp. japonica (Rice), this protein is Putative adagio-like protein 2.